A 414-amino-acid polypeptide reads, in one-letter code: Serine hydroxymethyltransferase (414 aa).

Residues Leu117 and 121–123 (GHL) each bind (6S)-5,6,7,8-tetrahydrofolate. Lys226 is modified (N6-(pyridoxal phosphate)lysine).

This sequence belongs to the SHMT family. Homodimer. Requires pyridoxal 5'-phosphate as cofactor.

The protein resides in the cytoplasm. The enzyme catalyses (6R)-5,10-methylene-5,6,7,8-tetrahydrofolate + glycine + H2O = (6S)-5,6,7,8-tetrahydrofolate + L-serine. Its pathway is one-carbon metabolism; tetrahydrofolate interconversion. It participates in amino-acid biosynthesis; glycine biosynthesis; glycine from L-serine: step 1/1. Catalyzes the reversible interconversion of serine and glycine with tetrahydrofolate (THF) serving as the one-carbon carrier. This reaction serves as the major source of one-carbon groups required for the biosynthesis of purines, thymidylate, methionine, and other important biomolecules. Also exhibits THF-independent aldolase activity toward beta-hydroxyamino acids, producing glycine and aldehydes, via a retro-aldol mechanism. This Dictyoglomus thermophilum (strain ATCC 35947 / DSM 3960 / H-6-12) protein is Serine hydroxymethyltransferase.